Reading from the N-terminus, the 596-residue chain is Beta-glucuronidase (596 aa).

Residues Asp-168 and Asn-412 each contribute to the D-glucuronate site. Residue Glu-413 is the Proton donor of the active site. Asn-464, Tyr-470, Glu-502, Trp-547, and Lys-566 together coordinate D-glucuronate. Catalysis depends on Glu-502, which acts as the Nucleophile. The N-K motif signature appears at 564–566; that stretch reads NKK.

Belongs to the glycosyl hydrolase 2 family.

The protein resides in the cytoplasm. The catalysed reaction is a beta-D-glucuronoside + H2O = D-glucuronate + an alcohol. Displays beta-glucuronidase activity with the artificial substrate p-nitrophenyl-beta-D-glucuronide (PNPG). Is probably involved in the metabolism of oligosaccharides containing the 3-O-beta-D-glucopyranosyl-beta-D-glucuronide structure released from bacterial and plant acidic carbohydrates. This is Beta-glucuronidase from Paenibacillus borealis.